The sequence spans 258 residues: Ribonuclease HII (258 aa).

In terms of domain architecture, RNase H type-2 spans 71–258; it reads ELIAGIDEVG…PIKSMVNFKY (188 aa). Positions 77, 78, and 169 each coordinate a divalent metal cation.

Belongs to the RNase HII family. Mn(2+) serves as cofactor. Mg(2+) is required as a cofactor.

It is found in the cytoplasm. The catalysed reaction is Endonucleolytic cleavage to 5'-phosphomonoester.. Its function is as follows. Endonuclease that specifically degrades the RNA of RNA-DNA hybrids. This chain is Ribonuclease HII, found in Lactococcus lactis subsp. cremoris (strain SK11).